A 311-amino-acid chain; its full sequence is 4-diphosphocytidyl-2-C-methyl-D-erythritol kinase (311 aa).

K10 is a catalytic residue. 105–115 (PVAGGMAGGSA) lines the ATP pocket. Residue D146 is part of the active site.

The protein belongs to the GHMP kinase family. IspE subfamily.

The catalysed reaction is 4-CDP-2-C-methyl-D-erythritol + ATP = 4-CDP-2-C-methyl-D-erythritol 2-phosphate + ADP + H(+). The protein operates within isoprenoid biosynthesis; isopentenyl diphosphate biosynthesis via DXP pathway; isopentenyl diphosphate from 1-deoxy-D-xylulose 5-phosphate: step 3/6. In terms of biological role, catalyzes the phosphorylation of the position 2 hydroxy group of 4-diphosphocytidyl-2C-methyl-D-erythritol. The protein is 4-diphosphocytidyl-2-C-methyl-D-erythritol kinase of Corynebacterium glutamicum (strain ATCC 13032 / DSM 20300 / JCM 1318 / BCRC 11384 / CCUG 27702 / LMG 3730 / NBRC 12168 / NCIMB 10025 / NRRL B-2784 / 534).